The following is a 403-amino-acid chain: Argininosuccinate synthase (403 aa).

Residue 10-18 coordinates ATP; sequence AYSGGLDTS. 2 residues coordinate L-citrulline: Tyr88 and Ser93. Position 118 (Gly118) interacts with ATP. Thr120, Asn124, and Asp125 together coordinate L-aspartate. Asn124 lines the L-citrulline pocket. Arg128, Ser177, Ser186, Glu263, and Tyr275 together coordinate L-citrulline.

The protein belongs to the argininosuccinate synthase family. Type 1 subfamily. Homotetramer.

The protein localises to the cytoplasm. It catalyses the reaction L-citrulline + L-aspartate + ATP = 2-(N(omega)-L-arginino)succinate + AMP + diphosphate + H(+). It functions in the pathway amino-acid biosynthesis; L-arginine biosynthesis; L-arginine from L-ornithine and carbamoyl phosphate: step 2/3. This Clostridium perfringens (strain ATCC 13124 / DSM 756 / JCM 1290 / NCIMB 6125 / NCTC 8237 / Type A) protein is Argininosuccinate synthase.